Consider the following 266-residue polypeptide: uncharacterized protein (266 aa).

This is an uncharacterized protein from Acanthamoeba polyphaga (Amoeba).